The following is a 147-amino-acid chain: Anti-sigma F factor (147 aa).

It belongs to the anti-sigma-factor family.

The catalysed reaction is L-seryl-[protein] + ATP = O-phospho-L-seryl-[protein] + ADP + H(+). It catalyses the reaction L-threonyl-[protein] + ATP = O-phospho-L-threonyl-[protein] + ADP + H(+). Functionally, binds to sigma F and blocks its ability to form an RNA polymerase holoenzyme (E-sigma F). Phosphorylates SpoIIAA on a serine residue. This phosphorylation may enable SpoIIAA to act as an anti-anti-sigma factor that counteracts SpoIIAB and thus releases sigma F from inhibition. The protein is Anti-sigma F factor of Priestia megaterium (Bacillus megaterium).